Here is a 357-residue protein sequence, read N- to C-terminus: Acyl-coenzyme A diphosphatase NUDT19 (357 aa).

The Nudix hydrolase domain maps to 10–242 (AATVMLAAGW…IWLAPPQFYE (233 aa)). The tract at residues 72 to 94 (PRFGLGPEPPRQPPFPGLSHGDA) is disordered. Over residues 78-87 (PEPPRQPPFP) the composition is skewed to pro residues. A Nudix box motif is present at residues 97–118 (AALPDDVALRICAIRETFEEAG). Residues E112 and E116 each contribute to the Mg(2+) site. N6-succinyllysine is present on K300. The Microbody targeting signal signature appears at 355–357 (AHL).

It belongs to the Nudix hydrolase family. As to quaternary structure, monomer. Mg(2+) is required as a cofactor. The cofactor is Mn(2+).

It is found in the peroxisome. It catalyses the reaction an acyl-CoA + H2O = an acyl-4'-phosphopantetheine + adenosine 3',5'-bisphosphate + 2 H(+). The catalysed reaction is CoA + H2O = (R)-4'-phosphopantetheine + adenosine 3',5'-bisphosphate + 2 H(+). It carries out the reaction hexanoyl-CoA + H2O = hexanoyl-4'-phosphopantetheine + adenosine 3',5'-bisphosphate + 2 H(+). The enzyme catalyses octanoyl-CoA + H2O = S-octanoyl-4'-phosphopantetheine + adenosine 3',5'-bisphosphate + 2 H(+). It catalyses the reaction butanoyl-CoA + H2O = S-butanoyl-4'-phosphopantetheine + adenosine 3',5'-bisphosphate + 2 H(+). The catalysed reaction is propanoyl-CoA + H2O = propanoyl-4'-phosphopantetheine + adenosine 3',5'-bisphosphate + 2 H(+). It carries out the reaction malonyl-CoA + H2O = malonyl-4'-phosphopantetheine + adenosine 3',5'-bisphosphate + 2 H(+). The enzyme catalyses succinyl-CoA + H2O = succinyl-4'-phosphopantetheine + adenosine 3',5'-bisphosphate + 2 H(+). It catalyses the reaction choloyl-CoA + H2O = S-choloyl-4'-phosphopantetheine + adenosine 3',5'-bisphosphate + 2 H(+). The catalysed reaction is 4,8-dimethylnonanoyl-CoA + H2O = S-(4,8-dimethylnonanoyl)-4'-phosphopantetheine + adenosine 3',5'-bisphosphate + 2 H(+). It carries out the reaction (9Z,12Z,15Z)-octadecatrienoyl-CoA + H2O = S-(9Z,12Z,15Z-octadecatrienoyl)-4'-phosphopantetheine + adenosine 3',5'-bisphosphate + 2 H(+). The enzyme catalyses (9Z,12Z)-octadecadienoyl-CoA + H2O = S-(9Z,12Z-octadecadienoyl)-4'-phosphopantetheine + adenosine 3',5'-bisphosphate + 2 H(+). It catalyses the reaction (9Z)-hexadecenoyl-CoA + H2O = S-(9Z-hexadecenoyl)-4'-phosphopantetheine + adenosine 3',5'-bisphosphate + 2 H(+). The catalysed reaction is (9Z)-tetradecenoyl-CoA + H2O = S-(9Z-tetradecenoyl)-4'-phosphopantetheine + adenosine 3',5'-bisphosphate + 2 H(+). It carries out the reaction (6Z)-octenoyl-CoA + H2O = S-(6Z-octenoyl)-4'-phosphopantetheine + adenosine 3',5'-bisphosphate + 2 H(+). The enzyme catalyses hexadecanoyl-CoA + H2O = S-hexadecanoyl-4'-phosphopantetheine + adenosine 3',5'-bisphosphate + 2 H(+). It catalyses the reaction tetradecanoyl-CoA + H2O = tetradecanoyl-4'-phosphopantetheine + adenosine 3',5'-bisphosphate + 2 H(+). The catalysed reaction is dodecanoyl-CoA + H2O = S-dodecanoyl-4'-phosphopantetheine + adenosine 3',5'-bisphosphate + 2 H(+). It carries out the reaction a 5'-end CoA-ribonucleoside in mRNA + H2O = a 5'-end phospho-adenosine-phospho-ribonucleoside in mRNA + (R)-4'-phosphopantetheine + 2 H(+). In terms of biological role, fatty acyl-coenzyme A (CoA) diphosphatase that hydrolyzes fatty acyl-CoA to yield acyl-4'-phosphopantetheine and adenosine 3',5'-bisphosphate. Mediates the hydrolysis of a wide range of CoA esters, including choloyl-CoA and branched-chain fatty-acyl-CoA esters and at low substrate concentrations medium and long-chain fatty-acyl-CoA esters are the primary substrates. Highest activity seen with medium-chain acyl-CoA esters and higher rates of activity seen with the unsaturated acyl-CoA esters compared with the saturated esters. Exhibits decapping activity towards dpCoA-capped RNAs in vitro. This chain is Acyl-coenzyme A diphosphatase NUDT19 (Nudt19), found in Mus caroli (Ryukyu mouse).